Reading from the N-terminus, the 278-residue chain is Bicarbonate transport system permease protein CmpB (278 aa).

7 consecutive transmembrane segments (helical) span residues 24–44 (LDGILLPLAGILGFLIIWQIF), 93–113 (VAQGFSIAAIIGISVGILVGL), 124–144 (LFQFLRMIAPLAWVPIALVAF), 151–171 (AIFVIFITAVWPILINTAEGV), 196–216 (VVLPAALPYIFTGLRIAIGLS), 217–237 (WLAIIAAEIVMSGIVGIGFFI), and 249–269 (IILAVIYIGAVGLLLDRFVAW). The ABC transmembrane type-1 domain occupies 86–267 (TIASLTRVAQ…AVGLLLDRFV (182 aa)).

This sequence belongs to the binding-protein-dependent transport system permease family. The complex is composed of two ATP-binding proteins (CmpC and CmpD), a transmembrane protein (CmpB) and a solute-binding protein (CmpA).

It is found in the cell inner membrane. Functionally, part of the ABC transporter complex CmpABCD involved in bicarbonate transport. Probably responsible for the translocation of the substrate across the membrane. The protein is Bicarbonate transport system permease protein CmpB (cmpB) of Synechococcus sp. (strain ATCC 27144 / PCC 6301 / SAUG 1402/1) (Anacystis nidulans).